A 258-amino-acid polypeptide reads, in one-letter code: Acyl-[acyl-carrier-protein]--UDP-N-acetylglucosamine O-acyltransferase (258 aa).

Belongs to the transferase hexapeptide repeat family. LpxA subfamily. In terms of assembly, homotrimer.

The protein localises to the cytoplasm. It catalyses the reaction a (3R)-hydroxyacyl-[ACP] + UDP-N-acetyl-alpha-D-glucosamine = a UDP-3-O-[(3R)-3-hydroxyacyl]-N-acetyl-alpha-D-glucosamine + holo-[ACP]. Its pathway is glycolipid biosynthesis; lipid IV(A) biosynthesis; lipid IV(A) from (3R)-3-hydroxytetradecanoyl-[acyl-carrier-protein] and UDP-N-acetyl-alpha-D-glucosamine: step 1/6. In terms of biological role, involved in the biosynthesis of lipid A, a phosphorylated glycolipid that anchors the lipopolysaccharide to the outer membrane of the cell. The chain is Acyl-[acyl-carrier-protein]--UDP-N-acetylglucosamine O-acyltransferase from Pseudomonas putida (strain GB-1).